Here is a 118-residue protein sequence, read N- to C-terminus: HTH-type transcriptional regulator SarT (118 aa).

The H-T-H motif DNA-binding region spans 55–78 (MRDIISYIGIDQSRIVKSVKELSK).

It belongs to the SarA family.

The protein localises to the cytoplasm. In terms of biological role, transcriptional regulator acting as an intermediary between major regulators SarA and agr and virulence genes. Represses alpha-hemolysin (hla) gene expression. The protein is HTH-type transcriptional regulator SarT (sarT) of Staphylococcus aureus (strain Mu50 / ATCC 700699).